We begin with the raw amino-acid sequence, 611 residues long: Threonine--tRNA ligase (611 aa).

A catalytic region spans residues 209–502; sequence DHRRLGKDLE…MTENYAGDFP (294 aa). Residues C302, H353, and H479 each coordinate Zn(2+).

The protein belongs to the class-II aminoacyl-tRNA synthetase family. As to quaternary structure, homodimer. The cofactor is Zn(2+).

Its subcellular location is the cytoplasm. The enzyme catalyses tRNA(Thr) + L-threonine + ATP = L-threonyl-tRNA(Thr) + AMP + diphosphate + H(+). Its function is as follows. Catalyzes the attachment of threonine to tRNA(Thr) in a two-step reaction: L-threonine is first activated by ATP to form Thr-AMP and then transferred to the acceptor end of tRNA(Thr). Also edits incorrectly charged L-seryl-tRNA(Thr). This Synechococcus sp. (strain CC9902) protein is Threonine--tRNA ligase.